The primary structure comprises 194 residues: Potassium-transporting ATPase KdpC subunit (194 aa).

Residues 12-34 (LFLLLLTGGVYPLLTTALGQWWF) traverse the membrane as a helical segment.

It belongs to the KdpC family. As to quaternary structure, the system is composed of three essential subunits: KdpA, KdpB and KdpC.

It localises to the cell inner membrane. Part of the high-affinity ATP-driven potassium transport (or Kdp) system, which catalyzes the hydrolysis of ATP coupled with the electrogenic transport of potassium into the cytoplasm. This subunit acts as a catalytic chaperone that increases the ATP-binding affinity of the ATP-hydrolyzing subunit KdpB by the formation of a transient KdpB/KdpC/ATP ternary complex. The polypeptide is Potassium-transporting ATPase KdpC subunit (Salmonella agona (strain SL483)).